The following is a 396-amino-acid chain: 1-deoxy-D-xylulose 5-phosphate reductoisomerase (396 aa).

NADPH-binding residues include Thr10, Gly11, Ser12, Ile13, Gln38, and Asn124. Lys125 contacts 1-deoxy-D-xylulose 5-phosphate. Glu126 provides a ligand contact to NADPH. Asp150 is a Mn(2+) binding site. 1-deoxy-D-xylulose 5-phosphate contacts are provided by Ser151, Glu152, Ser179, and His202. Mn(2+) is bound at residue Glu152. Gly208 lines the NADPH pocket. Residues Ser215, Asn220, Lys221, and Glu224 each coordinate 1-deoxy-D-xylulose 5-phosphate. Glu224 provides a ligand contact to Mn(2+).

Belongs to the DXR family. Mg(2+) serves as cofactor. Requires Mn(2+) as cofactor.

The catalysed reaction is 2-C-methyl-D-erythritol 4-phosphate + NADP(+) = 1-deoxy-D-xylulose 5-phosphate + NADPH + H(+). Its pathway is isoprenoid biosynthesis; isopentenyl diphosphate biosynthesis via DXP pathway; isopentenyl diphosphate from 1-deoxy-D-xylulose 5-phosphate: step 1/6. Its function is as follows. Catalyzes the NADPH-dependent rearrangement and reduction of 1-deoxy-D-xylulose-5-phosphate (DXP) to 2-C-methyl-D-erythritol 4-phosphate (MEP). In Ralstonia pickettii (strain 12J), this protein is 1-deoxy-D-xylulose 5-phosphate reductoisomerase.